The primary structure comprises 517 residues: Gallate 1-beta-glucosyltransferase 84A24 (517 aa).

Residue His-19 is the Proton acceptor of the active site. His-19 contributes to the an anthocyanidin binding site. UDP-alpha-D-glucose is bound by residues Gln-344, His-359, Trp-362, Asn-363, Ser-364, and Glu-367. Gly-382 lines the an anthocyanidin pocket. Asp-383 and Gln-384 together coordinate UDP-alpha-D-glucose.

Belongs to the UDP-glycosyltransferase family. As to expression, highly expressed in leaf. Also expressed in peel, stem, root and aril.

The protein resides in the cytoplasm. The catalysed reaction is 3,4,5-trihydroxybenzoate + UDP-alpha-D-glucose = 1-O-galloyl-beta-D-glucose + UDP. The enzyme catalyses 3,4-dihydroxybenzoate + UDP-alpha-D-glucose = 1-O-(3,4-dihydroxy-benzoyl)-beta-D-glucose + UDP. It carries out the reaction 4-hydroxybenzoate + UDP-alpha-D-glucose = 4-(beta-D-glucosyloxy)benzoate + UDP + H(+). It catalyses the reaction (E)-cinnamate + UDP-alpha-D-glucose = 1-O-(trans-cinnamoyl)-beta-D-glucose + UDP. The catalysed reaction is (E)-sinapate + UDP-alpha-D-glucose = 1-O-(trans-sinapoyl)-beta-D-glucose + UDP. The enzyme catalyses (E)-4-coumarate + UDP-alpha-D-glucose = 1-O-(trans-4-coumaroyl)-beta-D-glucose + UDP. It carries out the reaction (E)-caffeate + UDP-alpha-D-glucose = 1-O-[(E)-caffeoyl]-beta-D-glucose + UDP. It catalyses the reaction (E)-ferulate + UDP-alpha-D-glucose = 1-O-[(E)-feruloyl]-beta-D-glucose + UDP. The catalysed reaction is genistein + UDP-alpha-D-glucose = genistein 7-O-beta-D-glucoside + UDP + H(+). The enzyme catalyses apigenin + UDP-alpha-D-glucose = apigenin 7-O-beta-D-glucoside + UDP + H(+). It carries out the reaction luteolin + UDP-alpha-D-glucose = luteolin 7-O-beta-D-glucoside + UDP + H(+). In terms of biological role, glucosyltransferase that catalyzes the formation of 1-O-beta-D-glucose esters with hydroxybenzoic acids and cinnamic acid including its derivatives as preferred glucosyl acceptors. Has significant activity with gallic acid (3,4,5-trihydroxybenzoic acid), 3,4-dihydroxybenzoic acid, 4-hydroxybenzoic acid, cinnamic acid, sinapic acid, coumaric acid, caffeic acid and ferulic acid in vitro. Gallic acid is the predicted native substrate of the enzyme, which thus catalyzes the formation of 1-O-galloyl-beta-D-glucose, the first committed step of hydrolyzable tannins (HTs) biosynthesis, with punicalagin isomers being the major HTs of pomegranate. Catalyzes the formation of flavonoid glucosides with genistein, apigenin and luteolin in vitro. Has low activity with benzoic acid, 2-hydroxybenzoic acid, 3-hydroxybenzoic acid, 2,4-dihydroxybenzoic acid, naringenin and quercetin. No activity with catechol, resveratrol, chlorogenic acid, catechin and epicatechin (building blocks of proanthocyanidins) or cyanidin, delphinidin and pelargonidin (the three anthocyanidins). This chain is Gallate 1-beta-glucosyltransferase 84A24, found in Punica granatum (Pomegranate).